Reading from the N-terminus, the 700-residue chain is Elongation factor G (700 aa).

The tr-type G domain maps to glutamate 8–valine 290. GTP-binding positions include alanine 17–threonine 24, aspartate 88–histidine 92, and asparagine 142–aspartate 145.

The protein belongs to the TRAFAC class translation factor GTPase superfamily. Classic translation factor GTPase family. EF-G/EF-2 subfamily.

The protein resides in the cytoplasm. Catalyzes the GTP-dependent ribosomal translocation step during translation elongation. During this step, the ribosome changes from the pre-translocational (PRE) to the post-translocational (POST) state as the newly formed A-site-bound peptidyl-tRNA and P-site-bound deacylated tRNA move to the P and E sites, respectively. Catalyzes the coordinated movement of the two tRNA molecules, the mRNA and conformational changes in the ribosome. The chain is Elongation factor G from Mannheimia succiniciproducens (strain KCTC 0769BP / MBEL55E).